A 554-amino-acid polypeptide reads, in one-letter code: MMLSRAKPAVGNEVQQIDKKKKKGKKVPRLDELLAQRDFTGAITLLEFKRQVGESEEDTELWIGYCSFHLGDYKRSLEVFKALSQQEGCNPDVWVNLACTSFFLGMYKEADEAANKAPKSRLQNRLLFHLAHKFNDEKRLMVFHQNLQDVIEDQLSLASIHYMRSHYQEAIDIYKRILLENRDFLALNVYVALCYYKLDYYDVSQEVLAVYLQQVPDSTIALNLKACNHFRLYNGKAAEAELKGLMDSTSSPIEFAKELIKHNLVVFRAGEGALQVLPPLVDVIPEARLNLVIYYLRQDDVQEAFNLIKDLEPSTPQEYILKGVVNASLGQELGSRDHLKIAQQFFQLVGGSASECDTIPGRQCMASCFFLLRQFDDVLIYLNSIKSYFYNDDTFNFNYAQAKAAVGNYKEAEEVFLLIQNEKIKNDYTYLSWLARCYIMNKKPRMAWELYLKMETSGESFSLLQLIANDCYKMGHFYYAAKAFDILERLDPSPEYWEGKRGACVGIFQMILAGREPKETLREVLNLLRSTGNTQVEYIIRILKKWGKENRVPV.

Residues 1–23 (MMLSRAKPAVGNEVQQIDKKKKK) form a disordered region. TPR repeat units follow at residues 57–90 (EDTELWIGYCSFHLGDYKRSLEVFKALSQQEGCN), 92–125 (DVWVNLACTSFFLGMYKEADEAANKAPKSRLQNR), 151–184 (IEDQLSLASIHYMRSHYQEAIDIYKRILLENRDF), and 468–501 (ANDCYKMGHFYYAAKAFDILERLDPSPEYWEGKR).

This sequence belongs to the IFT56 family. As to quaternary structure, component of the IFT complex B.

It localises to the cell projection. It is found in the cilium. Functionally, component of the intraflagellar transport (IFT) complex B required for transport of proteins in the motile cilium. Required for transport of specific ciliary cargo proteins related to motility, while it is neither required for IFT complex B assembly or motion nor for cilium assembly. Plays a key role in maintaining the integrity of the IFT complex B and the proper ciliary localization of the IFT complex B components. Essential for maintaining proper microtubule organization within the ciliary axoneme. The sequence is that of Intraflagellar transport protein 56 from Xenopus tropicalis (Western clawed frog).